A 188-amino-acid chain; its full sequence is Threonylcarbamoyl-AMP synthase (188 aa).

One can recognise a YrdC-like domain in the interval 3 to 188; sequence QLQPSAVATT…RSGQILRNGS (186 aa).

Belongs to the SUA5 family. TsaC subfamily.

Its subcellular location is the cytoplasm. The catalysed reaction is L-threonine + hydrogencarbonate + ATP = L-threonylcarbamoyladenylate + diphosphate + H2O. Functionally, required for the formation of a threonylcarbamoyl group on adenosine at position 37 (t(6)A37) in tRNAs that read codons beginning with adenine. Catalyzes the conversion of L-threonine, HCO(3)(-)/CO(2) and ATP to give threonylcarbamoyl-AMP (TC-AMP) as the acyladenylate intermediate, with the release of diphosphate. In Shewanella frigidimarina (strain NCIMB 400), this protein is Threonylcarbamoyl-AMP synthase.